Here is a 76-residue protein sequence, read N- to C-terminus: Heat shock factor-binding protein 1 (76 aa).

This sequence belongs to the HSBP1 family. Homohexamer. Associates with heptad repeats of HSF1 trimers and probably also HSF1 monomers, and with HSP70. Association with HSF1 trimers and HSP70 coincides with attenuation of heat shock response and the conversion of HSF1 trimer to monomer.

Its subcellular location is the nucleus. Negative regulator of the heat shock response. Negatively affects HSF1 DNA-binding activity. May have a role in the suppression of the activation of the stress response during the aging process. This chain is Heat shock factor-binding protein 1 (HSBP1), found in Pongo abelii (Sumatran orangutan).